Here is a 457-residue protein sequence, read N- to C-terminus: Argininosuccinate lyase (457 aa).

The protein belongs to the lyase 1 family. Argininosuccinate lyase subfamily.

Its subcellular location is the cytoplasm. The catalysed reaction is 2-(N(omega)-L-arginino)succinate = fumarate + L-arginine. The protein operates within amino-acid biosynthesis; L-arginine biosynthesis; L-arginine from L-ornithine and carbamoyl phosphate: step 3/3. This Escherichia coli O1:K1 / APEC protein is Argininosuccinate lyase.